The chain runs to 328 residues: Putative thiosulfate sulfurtransferase mpst-1 (328 aa).

Rhodanese domains lie at 22–162 (NKEG…EVST) and 202–320 (KTSE…KKIS). Cys278 functions as the Cysteine persulfide intermediate in the catalytic mechanism.

It catalyses the reaction thiosulfate + hydrogen cyanide = thiocyanate + sulfite + 2 H(+). This chain is Putative thiosulfate sulfurtransferase mpst-1 (mpst-1), found in Caenorhabditis elegans.